A 335-amino-acid chain; its full sequence is Beta-ketoacyl-[acyl-carrier-protein] synthase III (335 aa).

Residues Cys119 and His261 contribute to the active site. The interval 262–266 (QANQR) is ACP-binding. Asn291 is an active-site residue.

This sequence belongs to the thiolase-like superfamily. FabH family. Homodimer.

It localises to the cytoplasm. The enzyme catalyses malonyl-[ACP] + acetyl-CoA + H(+) = 3-oxobutanoyl-[ACP] + CO2 + CoA. Its pathway is lipid metabolism; fatty acid biosynthesis. In terms of biological role, catalyzes the condensation reaction of fatty acid synthesis by the addition to an acyl acceptor of two carbons from malonyl-ACP. Catalyzes the first condensation reaction which initiates fatty acid synthesis and may therefore play a role in governing the total rate of fatty acid production. Possesses both acetoacetyl-ACP synthase and acetyl transacylase activities. Its substrate specificity determines the biosynthesis of branched-chain and/or straight-chain of fatty acids. The polypeptide is Beta-ketoacyl-[acyl-carrier-protein] synthase III (Prochlorococcus marinus (strain MIT 9312)).